The following is a 946-amino-acid chain: Zinc finger protein rotund (946 aa).

Disordered stretches follow at residues 10–30 (GPQLAHHPHSNPHNSSHGHSD) and 156–269 (FRKP…HNLN). A compositionally biased stretch (polar residues) spans 161–176 (NNNGYSWSTGNNNEVV). Low complexity predominate over residues 177–188 (SHSSNGHTNNHP). Composition is skewed to polar residues over residues 198 to 230 (ASATQATSVSAINLNQAQPASQTRSNFGSSIKS) and 242 to 269 (TCKSQENNSGQNPTPNSLSDHNPAHNLN). 6 consecutive C2H2-type zinc fingers follow at residues 488–510 (YQCKMCPQIFSSKADLQLHTQIH), 517–539 (YKCTQCSKAFANSSYLSQHTRIH), 545–567 (YRCEICQRKFTQLSHLQQHIRTH), 573–597 (YKCRHPGCQKAFSQLSNLQSHSRCH), 603–625 (FKCNSCYKCFSDEPSLLEHIPKH), and 634–656 (HICQYCGKSYTQETYLTKHMQKH). Residues 683-853 (GGSANPANGP…TPSAVGPYDA (171 aa)) are disordered. Composition is skewed to low complexity over residues 739–762 (HQQQQQQQQQQQQQQQQQQQQQQQ) and 770–790 (HGVPPQQHVPPQQQQQQQQQQ). Polar residues predominate over residues 813 to 822 (TAPNGSQSNG). The span at 828 to 841 (QPHHRMPDPVREDI) shows a compositional bias: basic and acidic residues.

The protein belongs to the krueppel C2H2-type zinc-finger protein family. In terms of assembly, interacts with nab; which acts as a corepressor. In terms of tissue distribution, isoform rn and isoform roe are expressed in non-overlapping domains in the larval imaginal disks. Isoform rn is first expressed during the early third larval instar in the leg, wing, haltere and antennal part of the eye-antennal imaginal disk. It is observed as a ring in the leg and antenna disks and in the presumptive wing pouch and capitellum of wing and haltere disks respectively. In wing disk it is expressed in 3 concentric domains in the wing pouch. In late third instar, expression of isoform rn in the leg disk is no longer evident, but is maintained in the other disks. Isoform roe appears in the third instar and is confined to the eye part of the eye-antennal imaginal disk in a band of 4-6 cells at the morphogenetic furrow. There is no evidence of roe expression in other imaginal disks.

The protein resides in the nucleus. Its function is as follows. Transcription factor involved in imaginal disks development. Isoform rn is required in the wings, antenna, haltere, proboscis and legs disks, while isoform roe is required in the eye disk. Together with nab corepressor, it is involved in the initiation and maintenance of wingless (wg) expression in the wing hinge, by limiting the expression of wg to this compartment. Also required for the epithelial-mesenchymal transition branch of basolateral junctions signaling. The sequence is that of Zinc finger protein rotund from Drosophila melanogaster (Fruit fly).